Consider the following 294-residue polypeptide: Homeobox-leucine zipper protein ATHB-16 (294 aa).

Residues Met1–Glu20 show a composition bias toward polar residues. Residues Met1–Gln31 are disordered. The segment at residues Leu56–Gln115 is a DNA-binding region (homeobox). Positions Leu116–Ile151 are leucine-zipper. Polar residues predominate over residues Ser219–Gly238. Residues Ser219–Thr241 form a disordered region.

Belongs to the HD-ZIP homeobox family. Class I subfamily. As to expression, widely expressed with a lower level in siliques.

It localises to the nucleus. In terms of biological role, probable transcription factor that may function as a negative regulator of the flowering time response to photoperiod. May act to repress cell expansion during plant development. This chain is Homeobox-leucine zipper protein ATHB-16 (ATHB-16), found in Arabidopsis thaliana (Mouse-ear cress).